A 92-amino-acid chain; its full sequence is MGRSLKKAPFVDEHLMKKVEAQAHDEKKKVIKTWSRRSTIFPSFIGYTIAVYDGRKHVPVYIQEDMVGHKLGEFAPTRTYKGHAADDKKTRR.

Belongs to the universal ribosomal protein uS19 family.

Its function is as follows. Protein S19 forms a complex with S13 that binds strongly to the 16S ribosomal RNA. The chain is Small ribosomal subunit protein uS19 from Streptococcus pyogenes serotype M49 (strain NZ131).